The chain runs to 104 residues: Large ribosomal subunit protein bL21 (104 aa).

This sequence belongs to the bacterial ribosomal protein bL21 family. Part of the 50S ribosomal subunit. Contacts protein L20.

Functionally, this protein binds to 23S rRNA in the presence of protein L20. This is Large ribosomal subunit protein bL21 from Helicobacter pylori (strain Shi470).